Here is a 444-residue protein sequence, read N- to C-terminus: Multidrug resistance protein MdtA (444 aa).

The N-terminal stretch at 1-20 (MKSQSKRTSRLFVFVGVVVA) is a signal peptide. The span at 37–52 (NNTSGAQQSARGQDTS) shows a compositional bias: polar residues. 2 disordered regions span residues 37–60 (NNTSGAQQSARGQDTSHGGRRNTP) and 399–444 (PRSA…AEKS). Over residues 409–419 (ASAEKAAAEAE) the composition is skewed to low complexity. Over residues 435-444 (ARSTTAAEKS) the composition is skewed to polar residues.

The protein belongs to the membrane fusion protein (MFP) (TC 8.A.1) family. Part of a tripartite efflux system composed of MdtA, MdtB and MdtC.

The protein localises to the cell inner membrane. The sequence is that of Multidrug resistance protein MdtA from Yersinia pseudotuberculosis serotype I (strain IP32953).